Reading from the N-terminus, the 501-residue chain is Ectoine/hydroxyectoine transporter (501 aa).

The next 12 membrane-spanning stretches (helical) occupy residues 9–29 (PVFY…ATLP), 45–65 (IHFG…LITL), 86–106 (FFTW…VFWG), 137–157 (AFFH…LVIA), 190–210 (LAVI…ILQM), 220–240 (VPTS…TYLI), 258–278 (LGSL…VFIL), 311–331 (WTIF…AFIA), 343–363 (VLGV…AFGG), 395–415 (LPMT…FLVT), 441–461 (IVWG…GGLE), and 465–485 (TASL…MASF).

The protein belongs to the BCCT transporter (TC 2.A.15) family.

It localises to the cell inner membrane. Mediates the import of ectoine and hydroxyectoine, which function as osmotic and cold stress protectants. Also has minor uptake activities for the compatible solutes proline and glycine betaine. The sequence is that of Ectoine/hydroxyectoine transporter from Virgibacillus pantothenticus.